Here is a 252-residue protein sequence, read N- to C-terminus: Pantothenate synthetase (252 aa).

29–36 (MGNLHAGH) provides a ligand contact to ATP. His36 serves as the catalytic Proton donor. Gln60 contacts (R)-pantoate. Gln60 contributes to the beta-alanine binding site. 146–149 (GEKD) is a binding site for ATP. Position 152 (Gln152) interacts with (R)-pantoate. Residues Val175 and 183 to 186 (CSSR) contribute to the ATP site.

Belongs to the pantothenate synthetase family. Homodimer.

The protein resides in the cytoplasm. The catalysed reaction is (R)-pantoate + beta-alanine + ATP = (R)-pantothenate + AMP + diphosphate + H(+). The protein operates within cofactor biosynthesis; (R)-pantothenate biosynthesis; (R)-pantothenate from (R)-pantoate and beta-alanine: step 1/1. Catalyzes the condensation of pantoate with beta-alanine in an ATP-dependent reaction via a pantoyl-adenylate intermediate. The chain is Pantothenate synthetase from Legionella pneumophila (strain Corby).